A 211-amino-acid polypeptide reads, in one-letter code: ATP-dependent Clp protease proteolytic subunit (211 aa).

The Nucleophile role is filled by Ser-114. His-139 is an active-site residue.

The protein belongs to the peptidase S14 family. Fourteen ClpP subunits assemble into 2 heptameric rings which stack back to back to give a disk-like structure with a central cavity, resembling the structure of eukaryotic proteasomes.

Its subcellular location is the cytoplasm. It carries out the reaction Hydrolysis of proteins to small peptides in the presence of ATP and magnesium. alpha-casein is the usual test substrate. In the absence of ATP, only oligopeptides shorter than five residues are hydrolyzed (such as succinyl-Leu-Tyr-|-NHMec, and Leu-Tyr-Leu-|-Tyr-Trp, in which cleavage of the -Tyr-|-Leu- and -Tyr-|-Trp bonds also occurs).. Its function is as follows. Cleaves peptides in various proteins in a process that requires ATP hydrolysis. Has a chymotrypsin-like activity. Plays a major role in the degradation of misfolded proteins. The polypeptide is ATP-dependent Clp protease proteolytic subunit (Pseudomonas fluorescens (strain ATCC BAA-477 / NRRL B-23932 / Pf-5)).